The sequence spans 505 residues: Maturase K (505 aa).

The protein belongs to the intron maturase 2 family. MatK subfamily.

The protein resides in the plastid. The protein localises to the chloroplast. Usually encoded in the trnK tRNA gene intron. Probably assists in splicing its own and other chloroplast group II introns. This chain is Maturase K, found in Kunzea capitata (Pink kunzea).